Reading from the N-terminus, the 286-residue chain is Bifunctional protein FolD (286 aa).

NADP(+) contacts are provided by residues 166–168 (GQS), serine 191, and isoleucine 232.

The protein belongs to the tetrahydrofolate dehydrogenase/cyclohydrolase family. In terms of assembly, homodimer.

The enzyme catalyses (6R)-5,10-methylene-5,6,7,8-tetrahydrofolate + NADP(+) = (6R)-5,10-methenyltetrahydrofolate + NADPH. It carries out the reaction (6R)-5,10-methenyltetrahydrofolate + H2O = (6R)-10-formyltetrahydrofolate + H(+). Its pathway is one-carbon metabolism; tetrahydrofolate interconversion. Functionally, catalyzes the oxidation of 5,10-methylenetetrahydrofolate to 5,10-methenyltetrahydrofolate and then the hydrolysis of 5,10-methenyltetrahydrofolate to 10-formyltetrahydrofolate. In Alkalilimnicola ehrlichii (strain ATCC BAA-1101 / DSM 17681 / MLHE-1), this protein is Bifunctional protein FolD.